The primary structure comprises 277 residues: Hydroxypyruvate/pyruvate aldolase (277 aa).

H54 serves as the catalytic Proton acceptor. A divalent metal cation contacts are provided by E158 and D184.

Belongs to the HpcH/HpaI aldolase family. Requires a divalent metal cation as cofactor.

It catalyses the reaction D-glyceraldehyde + 3-hydroxypyruvate = (3R,4S,5R)-3,4,5,6-tetrahydroxy-2-oxohexanoate. The enzyme catalyses D-glyceraldehyde + 3-hydroxypyruvate = 2-dehydro-D-gluconate. The catalysed reaction is D-glyceraldehyde + 3-hydroxypyruvate = 2-dehydro-D-galactonate. It carries out the reaction D-glyceraldehyde + pyruvate = 2-dehydro-3-deoxy-L-galactonate. In terms of biological role, aldolase which can catalyze in vitro the aldolisation reaction between hydroxypyruvate (HPA) or pyruvate (PA) and D-glyceraldehyde (D-GA). The condensation of hydroxypyruvate and D-glyceraldehyde produces (3R,4S,5R)-3,4,5,6-tetrahydroxy-2-oxohexanoate as the major product, 2-dehydro-D-gluconate and 2-dehydro-D-galactonate. The condensation of pyruvate and D-glyceraldehyde produces 2-dehydro-3-deoxy-L-galactonate as the major product. This Deinococcus radiodurans (strain ATCC 13939 / DSM 20539 / JCM 16871 / CCUG 27074 / LMG 4051 / NBRC 15346 / NCIMB 9279 / VKM B-1422 / R1) protein is Hydroxypyruvate/pyruvate aldolase.